Consider the following 93-residue polypeptide: Large ribosomal subunit protein bL27 (93 aa).

Residues 1-9 (MIKINLQLF) constitute a propeptide that is removed on maturation.

Belongs to the bacterial ribosomal protein bL27 family. The N-terminus is cleaved by ribosomal processing cysteine protease Prp.

This is Large ribosomal subunit protein bL27 from Ruminiclostridium cellulolyticum (strain ATCC 35319 / DSM 5812 / JCM 6584 / H10) (Clostridium cellulolyticum).